The chain runs to 558 residues: Glypican-1 (558 aa).

The N-terminal stretch at 1–23 (MELRARGWWLLCAAAALVACARG) is a signal peptide. Cystine bridges form between Cys-32–Cys-68, Cys-62–Cys-256, Cys-69–Cys-259, Cys-191–Cys-343, Cys-246–Cys-279, Cys-268–Cys-415, and Cys-272–Cys-401. N-linked (GlcNAc...) asparagine glycans are attached at residues Asn-79 and Asn-116. Residues 341–374 (QGCGNPKVNPQGPGPEEKRRRGKLAPRERPPSGT) are disordered. The segment covering 355 to 370 (PEEKRRRGKLAPRERP) has biased composition (basic and acidic residues). Residues Ser-486, Ser-488, and Ser-490 are each glycosylated (O-linked (Xyl...) (heparan sulfate) serine). Residues 505–534 (RKSSSSRTPLTHALPGLSEQEGQKTSAASC) are disordered. Ser-530 carries GPI-anchor amidated serine lipidation. The propeptide at 531–558 (AASCPQPPTFLLPLLLFLALTVARPRWR) is removed in mature form.

It belongs to the glypican family. S-nitrosylated in a Cu(2+)-dependent manner. Nitric acid (NO) is released from the nitrosylated cysteines by ascorbate or by some other reducing agent, in a Cu(2+) or Zn(2+) dependent manner. This free nitric oxide is then capable of cleaving the heparan sulfate side chains. In terms of processing, N- and O-glycosylated. N-glycosylation is mainly of the complex type containing sialic acid. O-glycosylated with heparan sulfate. The heparan sulfate chains can be cleaved either by the action of heparanase or, degraded by a deaminative process that uses nitric oxide (NO) released from the S-nitrosylated cysteines. This process is triggered by ascorbate, or by some other reducing agent, in a Cu(2+)- or Zn(2+) dependent manner. Cu(2+) ions are provided by ceruloproteins such as APP, PRNP or CP which associate with GCP1 in intracellular compartments or lipid rafts. Post-translationally, this cell-associated glypican is further processed to give rise to a medium-released species.

The protein localises to the cell membrane. The protein resides in the endosome. Its subcellular location is the secreted. It is found in the extracellular space. Functionally, cell surface proteoglycan that bears heparan sulfate. Binds, via the heparan sulfate side chains, alpha-4 (V) collagen and participates in Schwann cell myelination. May act as a catalyst in increasing the rate of conversion of prion protein PRPN(C) to PRNP(Sc) via associating (via the heparan sulfate side chains) with both forms of PRPN, targeting them to lipid rafts and facilitating their interaction. Required for proper skeletal muscle differentiation by sequestering FGF2 in lipid rafts preventing its binding to receptors (FGFRs) and inhibiting the FGF-mediated signaling. The chain is Glypican-1 (GPC1) from Homo sapiens (Human).